A 395-amino-acid polypeptide reads, in one-letter code: Type II restriction enzyme BsuFI (395 aa).

Homodimer. It depends on Mg(2+) as a cofactor.

It carries out the reaction Endonucleolytic cleavage of DNA to give specific double-stranded fragments with terminal 5'-phosphates.. Its function is as follows. A P subtype restriction enzyme that recognizes the double-stranded sequence 5'-CCGG-3' and cleaves after C-1. The protein is Type II restriction enzyme BsuFI (hsdFR) of Bacillus subtilis.